Consider the following 196-residue polypeptide: Imidazoleglycerol-phosphate dehydratase (196 aa).

It belongs to the imidazoleglycerol-phosphate dehydratase family.

The protein localises to the cytoplasm. The enzyme catalyses D-erythro-1-(imidazol-4-yl)glycerol 3-phosphate = 3-(imidazol-4-yl)-2-oxopropyl phosphate + H2O. Its pathway is amino-acid biosynthesis; L-histidine biosynthesis; L-histidine from 5-phospho-alpha-D-ribose 1-diphosphate: step 6/9. The sequence is that of Imidazoleglycerol-phosphate dehydratase from Nitratidesulfovibrio vulgaris (strain DSM 19637 / Miyazaki F) (Desulfovibrio vulgaris).